The chain runs to 83 residues: Mu-theraphotoxin-Hhn2m (83 aa).

A signal peptide spans 1 to 21 (MKASMFLALAGLVLLFVVGYA). The propeptide occupies 22-48 (SESEEKEFPIELLSKIFAVDVFKGEER). Cystine bridges form between cysteine 50-cysteine 65, cysteine 57-cysteine 70, and cysteine 64-cysteine 77. Leucine 81 bears the Leucine amide mark.

Belongs to the neurotoxin 10 (Hwtx-1) family. 15 (Hntx-3) subfamily. Monomer. Expressed by the venom gland.

It localises to the secreted. Its function is as follows. Lethal neurotoxin. Selectively blocks tetrodotoxin-sensitive voltage-gated sodium channels (Nav). Does not affect tetrodotoxin-resistant voltage-gated sodium channels or calcium channels. In Cyriopagopus hainanus (Chinese bird spider), this protein is Mu-theraphotoxin-Hhn2m.